The following is a 349-amino-acid chain: PhoH-like protein (349 aa).

147–154 contributes to the ATP binding site; the sequence is GPAGTGKT.

It belongs to the PhoH family.

It localises to the cytoplasm. This is PhoH-like protein from Mycobacterium leprae (strain TN).